Reading from the N-terminus, the 166-residue chain is MASLTSAAVTIPSFTGLKAGRAPTTPSTSIKPPTPMSFSVKASFKEAIGTALVATAAGAVLASNALAVEVLLGGSDGSLAFVPSNIEVAAGETVVFKNNAGFPHNVLFDEDEVPKGVDAGAISMKEEDLLNAPGETFSVTLKEKGTYSIYCSPHQGAGMAGKITVN.

The N-terminal 67 residues, 1–67, are a transit peptide targeting the chloroplast; sequence MASLTSAAVT…GAVLASNALA (67 aa). A Plastocyanin-like domain is found at 68 to 166; the sequence is VEVLLGGSDG…AGMAGKITVN (99 aa). H104, C151, H154, and M159 together coordinate Cu cation.

It belongs to the plastocyanin family. The cofactor is Cu(2+).

Its subcellular location is the plastid. The protein localises to the chloroplast thylakoid membrane. Functionally, participates in electron transfer between P700 and the cytochrome b6-f complex in photosystem I. The chain is Plastocyanin, chloroplastic (PETE) from Fritillaria agrestis (Stinkbells).